The chain runs to 725 residues: Kinesin-like protein KIN-8A (725 aa).

Residues 1 to 32 (MPVSTRSKVMKQERNEQENTNLNLPLRNPHQG) are disordered. A Kinesin motor domain is found at 151-481 (RILVFVRLRP…LHWADRAKEI (331 aa)). Residue 243-250 (GATGAGKT) coordinates ATP. Coiled-coil stretches lie at residues 499 to 541 (EGAD…AANN) and 583 to 617 (ESLKRTKAEEAVKELQLTVKALKMEMERMKREHGL). 2 disordered regions span residues 652 to 672 (GSLRPKEKEKELKSPSHRFAS) and 691 to 725 (SPALDRRKTRSHGLVHQEAPSKLLQPGFARPHMKH). Basic and acidic residues predominate over residues 655–665 (RPKEKEKELKS).

This sequence belongs to the TRAFAC class myosin-kinesin ATPase superfamily. Kinesin family. KIN-8 subfamily.

The protein is Kinesin-like protein KIN-8A of Arabidopsis thaliana (Mouse-ear cress).